The sequence spans 452 residues: tRNA modification GTPase MnmE (452 aa).

Arg-25, Glu-82, and Arg-125 together coordinate (6S)-5-formyl-5,6,7,8-tetrahydrofolate. Residues 221-374 (GLHVVLAGKP…LRARLLALAG (154 aa)) enclose the TrmE-type G domain. Asn-231 serves as a coordination point for K(+). Residues 231 to 236 (NVGKSS), 250 to 256 (TPIAGTT), 275 to 278 (DTAG), and 355 to 357 (SAR) contribute to the GTP site. Ser-235 lines the Mg(2+) pocket. K(+) is bound by residues Thr-250, Ile-252, and Thr-255. Thr-256 lines the Mg(2+) pocket. Residue Lys-452 participates in (6S)-5-formyl-5,6,7,8-tetrahydrofolate binding.

Belongs to the TRAFAC class TrmE-Era-EngA-EngB-Septin-like GTPase superfamily. TrmE GTPase family. Homodimer. Heterotetramer of two MnmE and two MnmG subunits. Requires K(+) as cofactor.

The protein resides in the cytoplasm. Its function is as follows. Exhibits a very high intrinsic GTPase hydrolysis rate. Involved in the addition of a carboxymethylaminomethyl (cmnm) group at the wobble position (U34) of certain tRNAs, forming tRNA-cmnm(5)s(2)U34. This is tRNA modification GTPase MnmE from Bordetella petrii (strain ATCC BAA-461 / DSM 12804 / CCUG 43448).